Reading from the N-terminus, the 212-residue chain is Uracil phosphoribosyltransferase (212 aa).

Residues Arg78, Arg103, and Asp130 to Ser138 contribute to the 5-phospho-alpha-D-ribose 1-diphosphate site. Residues Ile193 and Gly198–Ala200 contribute to the uracil site. Asp199 lines the 5-phospho-alpha-D-ribose 1-diphosphate pocket.

This sequence belongs to the UPRTase family. Mg(2+) serves as cofactor.

It carries out the reaction UMP + diphosphate = 5-phospho-alpha-D-ribose 1-diphosphate + uracil. It participates in pyrimidine metabolism; UMP biosynthesis via salvage pathway; UMP from uracil: step 1/1. Allosterically activated by GTP. Its function is as follows. Catalyzes the conversion of uracil and 5-phospho-alpha-D-ribose 1-diphosphate (PRPP) to UMP and diphosphate. The chain is Uracil phosphoribosyltransferase from Pseudomonas fluorescens (strain Pf0-1).